The chain runs to 178 residues: Transcription factor E (178 aa).

The region spanning 5-89 is the HTH TFE/IIEalpha-type domain; sequence AEELILSLAK…YWKVNIDQIN (85 aa).

It belongs to the TFE family. Monomer. Interaction with RNA polymerase subunits RpoF and RpoE is necessary for Tfe stimulatory transcription activity. Able to interact with Tbp and RNA polymerase in the absence of DNA promoter. Interacts both with the preinitiation and elongation complexes.

Its function is as follows. Transcription factor that plays a role in the activation of archaeal genes transcribed by RNA polymerase. Facilitates transcription initiation by enhancing TATA-box recognition by TATA-box-binding protein (Tbp), and transcription factor B (Tfb) and RNA polymerase recruitment. Not absolutely required for transcription in vitro, but particularly important in cases where Tbp or Tfb function is not optimal. It dynamically alters the nucleic acid-binding properties of RNA polymerases by stabilizing the initiation complex and destabilizing elongation complexes. Seems to translocate with the RNA polymerase following initiation and acts by binding to the non template strand of the transcription bubble in elongation complexes. The chain is Transcription factor E from Sulfurisphaera tokodaii (strain DSM 16993 / JCM 10545 / NBRC 100140 / 7) (Sulfolobus tokodaii).